Reading from the N-terminus, the 223-residue chain is uncharacterized protein (223 aa).

The next 5 helical transmembrane spans lie at Leu28–Thr48, Leu59–Ala79, Ala88–Ile108, Ile128–Ser148, and Ala176–Val196.

It localises to the cell membrane. This is an uncharacterized protein from Mycoplasma pneumoniae (strain ATCC 29342 / M129 / Subtype 1) (Mycoplasmoides pneumoniae).